A 269-amino-acid polypeptide reads, in one-letter code: Surfeit locus protein 4 (269 aa).

5 helical membrane-spanning segments follow: residues 64–84, 92–112, 179–199, 203–223, and 242–262; these read FLAT…CVLI, YACF…SILW, FFSI…AIGF, LAAL…NAFW, and TTSV…GVSM. The Di-lysine motif signature appears at 266-269; the sequence is KKEW.

It belongs to the SURF4 family.

It is found in the endoplasmic reticulum membrane. It localises to the endoplasmic reticulum-Golgi intermediate compartment membrane. Its subcellular location is the golgi apparatus membrane. Functionally, endoplasmic reticulum cargo receptor that mediates the export of lipoproteins by recruiting cargos into COPII vesicles to facilitate their secretion. Acts as a cargo receptor for lipoproteins bearing both APOB and APOA1, thereby regulating lipoprotein delivery and the maintenance of lipid homeostasis. This chain is Surfeit locus protein 4, found in Takifugu rubripes (Japanese pufferfish).